Reading from the N-terminus, the 158-residue chain is 2-C-methyl-D-erythritol 2,4-cyclodiphosphate synthase (158 aa).

Residues Asp-9 and His-11 each contribute to the a divalent metal cation site. 4-CDP-2-C-methyl-D-erythritol 2-phosphate contacts are provided by residues 9–11 (DVH) and 35–36 (HS). His-43 contacts a divalent metal cation. 4-CDP-2-C-methyl-D-erythritol 2-phosphate-binding positions include 57–59 (DIG), 62–66 (FPDTD), 133–136 (TTTE), Phe-140, and Arg-143.

Belongs to the IspF family. As to quaternary structure, homotrimer. The cofactor is a divalent metal cation.

The enzyme catalyses 4-CDP-2-C-methyl-D-erythritol 2-phosphate = 2-C-methyl-D-erythritol 2,4-cyclic diphosphate + CMP. It functions in the pathway isoprenoid biosynthesis; isopentenyl diphosphate biosynthesis via DXP pathway; isopentenyl diphosphate from 1-deoxy-D-xylulose 5-phosphate: step 4/6. Involved in the biosynthesis of isopentenyl diphosphate (IPP) and dimethylallyl diphosphate (DMAPP), two major building blocks of isoprenoid compounds. Catalyzes the conversion of 4-diphosphocytidyl-2-C-methyl-D-erythritol 2-phosphate (CDP-ME2P) to 2-C-methyl-D-erythritol 2,4-cyclodiphosphate (ME-CPP) with a corresponding release of cytidine 5-monophosphate (CMP). This chain is 2-C-methyl-D-erythritol 2,4-cyclodiphosphate synthase, found in Haemophilus influenzae (strain 86-028NP).